A 1322-amino-acid chain; its full sequence is Transcription elongation factor SPT6-like (1322 aa).

Basic and acidic residues predominate over residues 1 to 17; sequence MNRIDEEPQIHEDPVEN. Disordered regions lie at residues 1-65 and 90-113; these read MNRI…KKDE and KRLK…DLSH. Residues 18-33 show a composition bias toward acidic residues; the sequence is REEDDEDEDDQYEFDD. Over residues 48-65 the composition is skewed to basic and acidic residues; the sequence is EQRHCSEKKSRSRRKKDE. Positions 97–110 are enriched in acidic residues; the sequence is EEEDKINNDDDDDD. An S1 motif domain is found at 1017 to 1088; the sequence is GRIVQATVKK…QRYHVLLVCK (72 aa).

It belongs to the SPT6 family.

Its subcellular location is the nucleus. In terms of biological role, transcription elongation factor that enhances the transcription elongation by RNA polymerase II (RNAPII). This is Transcription elongation factor SPT6-like from Arabidopsis thaliana (Mouse-ear cress).